The sequence spans 131 residues: Ribosome-binding factor A (131 aa).

This sequence belongs to the RbfA family. As to quaternary structure, monomer. Binds 30S ribosomal subunits, but not 50S ribosomal subunits or 70S ribosomes.

It is found in the cytoplasm. Functionally, one of several proteins that assist in the late maturation steps of the functional core of the 30S ribosomal subunit. Associates with free 30S ribosomal subunits (but not with 30S subunits that are part of 70S ribosomes or polysomes). Required for efficient processing of 16S rRNA. May interact with the 5'-terminal helix region of 16S rRNA. The protein is Ribosome-binding factor A of Thermotoga petrophila (strain ATCC BAA-488 / DSM 13995 / JCM 10881 / RKU-1).